The primary structure comprises 107 residues: Putative double-stranded DNA mimic protein CGSHiGG_01135 (107 aa).

It belongs to the putative dsDNA mimic protein family.

May act as a double-stranded DNA (dsDNA) mimic. Probably regulates the activity of a dsDNA-binding protein. The protein is Putative double-stranded DNA mimic protein CGSHiGG_01135 of Haemophilus influenzae (strain PittGG).